A 513-amino-acid polypeptide reads, in one-letter code: Probable G-protein coupled receptor Mth-like 9 (513 aa).

The first 19 residues, 1–19, serve as a signal peptide directing secretion; sequence MVSPLIILLIIWLSVGAKS. The Extracellular portion of the chain corresponds to 20-207; sequence VEIASINHPC…NCERFQTGYR (188 aa). 4 disulfide bridges follow: Cys29–Cys82, Cys84–Cys89, Cys93–Cys181, and Cys94–Cys107. An N-linked (GlcNAc...) asparagine glycan is attached at Asn36. Asn106, Asn125, and Asn165 each carry an N-linked (GlcNAc...) asparagine glycan. Residues 208–228 traverse the membrane as a helical segment; the sequence is VWIYAICSIIAIIINIFILSL. Residues 229 to 242 are Cytoplasmic-facing; the sequence is LGSVRDARKSHYGQ. Residues 243–263 traverse the membrane as a helical segment; sequence LIIYYLLSMIVGYSLLVYLAL. At 264–276 the chain is on the extracellular side; the sequence is KNPMKLSHVACRN. Residues 277-297 traverse the membrane as a helical segment; sequence IGFLAYFCIMLSFVFLAICSL. Topologically, residues 298-314 are cytoplasmic; it reads DFLLKFKQKAVRSSVRR. Residues 315-335 form a helical membrane-spanning segment; that stretch reads LSLALAVLAVIGLRFLVSLAQ. The Extracellular portion of the chain corresponds to 336–360; the sequence is DSKLPKHFKPGMGEDYCWFDVRTWG. A helical transmembrane segment spans residues 361 to 381; it reads ILIYYYGPIALLLIFSIVCCL. At 382–403 the chain is on the cytoplasmic side; sequence KAYFSIYELPPDTQYILGTQLK. The chain crosses the membrane as a helical span at residues 404–424; sequence IVKTHFYAFSAYIVGVFAVWI. Over 425 to 438 the chain is Extracellular; sequence REIVVYIMARVREH. The helical transmembrane segment at 439–459 threads the bilayer; that stretch reads FFIIDFWSGICILGLAIAGFI. The Cytoplasmic portion of the chain corresponds to 460 to 513; sequence LLLGKNLHVKSWWAINVESSQTDLSIINARVYKFDEKGDLKSSDSPYKPTVTSL.

This sequence belongs to the G-protein coupled receptor 2 family. Mth subfamily.

The protein localises to the cell membrane. The chain is Probable G-protein coupled receptor Mth-like 9 (mthl9) from Drosophila melanogaster (Fruit fly).